Here is a 211-residue protein sequence, read N- to C-terminus: N-(5'-phosphoribosyl)anthranilate isomerase (211 aa).

It belongs to the TrpF family.

It carries out the reaction N-(5-phospho-beta-D-ribosyl)anthranilate = 1-(2-carboxyphenylamino)-1-deoxy-D-ribulose 5-phosphate. The protein operates within amino-acid biosynthesis; L-tryptophan biosynthesis; L-tryptophan from chorismate: step 3/5. The chain is N-(5'-phosphoribosyl)anthranilate isomerase from Pseudomonas aeruginosa (strain LESB58).